A 378-amino-acid polypeptide reads, in one-letter code: Dof zinc finger protein 1 (378 aa).

Residues 28 to 38 (GANPNPAATAP) are compositionally biased toward low complexity. Residues 28-79 (GANPNPAATAPSSVTGGALRGGGGGGAPPVAGGAGAGSTERRARPQKEKALN) form a disordered region. The segment covering 45–63 (ALRGGGGGGAPPVAGGAGA) has biased composition (gly residues). Over residues 66 to 77 (TERRARPQKEKA) the composition is skewed to basic and acidic residues. The Dof-type zinc-finger motif lies at 78 to 132 (LNCPRCNSTNTKFCYYNNYSLQQPRYFCKTCRRYWTEGGSLRNVPVGGGSRKNKR). C80, C83, C105, and C108 together coordinate Zn(2+). Disordered stretches follow at residues 116–148 (GSLR…ASTA), 203–222 (SLES…NGRG), and 316–378 (LKPT…GTSW). Over residues 133–148 (SSSSAASASPASASTA) the composition is skewed to low complexity. Composition is skewed to gly residues over residues 323–338 (GTGG…GVDG), 350–361 (AGGGGGGPGGHD), and 369–378 (MIGGGSGTSW).

The protein localises to the nucleus. In terms of biological role, transcription factor that may transactivate seed storage protein genes in developing seeds. This chain is Dof zinc finger protein 1, found in Oryza sativa subsp. japonica (Rice).